Here is a 513-residue protein sequence, read N- to C-terminus: 2,3-bisphosphoglycerate-independent phosphoglycerate mutase (513 aa).

2 residues coordinate Mn(2+): Asp-13 and Ser-63. Ser-63 (phosphoserine intermediate) is an active-site residue. Substrate-binding positions include His-124, 154 to 155 (RD), Arg-186, Arg-192, 262 to 265 (RADR), and Lys-335. Asp-402, His-406, Asp-443, His-444, and His-462 together coordinate Mn(2+).

This sequence belongs to the BPG-independent phosphoglycerate mutase family. In terms of assembly, monomer. The cofactor is Mn(2+).

It carries out the reaction (2R)-2-phosphoglycerate = (2R)-3-phosphoglycerate. The protein operates within carbohydrate degradation; glycolysis; pyruvate from D-glyceraldehyde 3-phosphate: step 3/5. Functionally, catalyzes the interconversion of 2-phosphoglycerate and 3-phosphoglycerate. This chain is 2,3-bisphosphoglycerate-independent phosphoglycerate mutase, found in Shewanella amazonensis (strain ATCC BAA-1098 / SB2B).